The primary structure comprises 617 residues: tRNA 5-methylaminomethyl-2-thiouridine biosynthesis bifunctional protein MnmC (617 aa).

The tract at residues methionine 1–proline 226 is tRNA (mnm(5)s(2)U34)-methyltransferase. The interval isoleucine 241–glycine 617 is FAD-dependent cmnm(5)s(2)U34 oxidoreductase.

This sequence in the N-terminal section; belongs to the methyltransferase superfamily. tRNA (mnm(5)s(2)U34)-methyltransferase family. In the C-terminal section; belongs to the DAO family. FAD serves as cofactor.

It is found in the cytoplasm. It catalyses the reaction 5-aminomethyl-2-thiouridine(34) in tRNA + S-adenosyl-L-methionine = 5-methylaminomethyl-2-thiouridine(34) in tRNA + S-adenosyl-L-homocysteine + H(+). Catalyzes the last two steps in the biosynthesis of 5-methylaminomethyl-2-thiouridine (mnm(5)s(2)U) at the wobble position (U34) in tRNA. Catalyzes the FAD-dependent demodification of cmnm(5)s(2)U34 to nm(5)s(2)U34, followed by the transfer of a methyl group from S-adenosyl-L-methionine to nm(5)s(2)U34, to form mnm(5)s(2)U34. The polypeptide is tRNA 5-methylaminomethyl-2-thiouridine biosynthesis bifunctional protein MnmC (Nitrosospira multiformis (strain ATCC 25196 / NCIMB 11849 / C 71)).